Reading from the N-terminus, the 898-residue chain is DNA topoisomerase 1 (898 aa).

In terms of domain architecture, Toprim spans 2-126 (SKLVIVESPT…IKRMVFHEIT (125 aa)). 2 residues coordinate Mg(2+): Glu8 and Asp95. Residues 141–583 (DENLVHAQET…GFFLGESGLE (443 aa)) enclose the Topo IA-type catalytic domain. An interaction with DNA region spans residues 175 to 180 (SAGRVQ). Tyr320 (O-(5'-phospho-DNA)-tyrosine intermediate) is an active-site residue. The disordered stretch occupies residues 840–898 (AEKAGSGKKTSRKKATTTAKGTKKTTSKKASATGTAKKTTTKRTTRKKAASPDQSSEAG). Positions 848–866 (KTSRKKATTTAKGTKKTTS) are enriched in basic residues. Low complexity predominate over residues 867 to 877 (KKASATGTAKK). Residues 878 to 888 (TTTKRTTRKKA) are compositionally biased toward basic residues.

This sequence belongs to the type IA topoisomerase family. As to quaternary structure, monomer. The cofactor is Mg(2+).

It catalyses the reaction ATP-independent breakage of single-stranded DNA, followed by passage and rejoining.. Functionally, releases the supercoiling and torsional tension of DNA, which is introduced during the DNA replication and transcription, by transiently cleaving and rejoining one strand of the DNA duplex. Introduces a single-strand break via transesterification at a target site in duplex DNA. The scissile phosphodiester is attacked by the catalytic tyrosine of the enzyme, resulting in the formation of a DNA-(5'-phosphotyrosyl)-enzyme intermediate and the expulsion of a 3'-OH DNA strand. The free DNA strand then undergoes passage around the unbroken strand, thus removing DNA supercoils. Finally, in the religation step, the DNA 3'-OH attacks the covalent intermediate to expel the active-site tyrosine and restore the DNA phosphodiester backbone. This is DNA topoisomerase 1 from Synechocystis sp. (strain ATCC 27184 / PCC 6803 / Kazusa).